A 177-amino-acid chain; its full sequence is Platelet glycoprotein IX (177 aa).

Residues 1–16 (MPAWGALFLLWATAEA) form the signal peptide. In terms of domain architecture, LRRNT spans 17-51 (TKDCPSPCTCRALETMGLWVDCRGHGLTALPALPA). At 17–147 (TKDCPSPCTC…QLQASWVRPG (131 aa)) the chain is on the extracellular side. The N-linked (GlcNAc...) asparagine glycan is linked to Asn-60. The stretch at 60 to 83 (NNSLQSVPPGAFDHLPQLQTLDVT) is one LRR repeat. The LRRCT domain occupies 85 to 137 (NPWHCDCSLTYLRLWLEDRTPEALLQVRCASPSLAAHGPLGRLTGYQLGSCGW). The chain crosses the membrane as a helical span at residues 148-168 (VLWDVALVAVAALGLALLAGL). Residues 169–177 (LCATTEALD) are Cytoplasmic-facing.

In terms of assembly, two GP-Ib beta are disulfide-linked to one GP-Ib alpha. GP-IX is complexed with the GP-Ib heterodimer via a non covalent linkage.

The protein resides in the membrane. The GPIb-V-IX complex functions as the vWF receptor and mediates vWF-dependent platelet adhesion to blood vessels. The adhesion of platelets to injured vascular surfaces in the arterial circulation is a critical initiating event in hemostasis. GP-IX may provide for membrane insertion and orientation of GP-Ib. The sequence is that of Platelet glycoprotein IX (GP9) from Homo sapiens (Human).